Here is a 333-residue protein sequence, read N- to C-terminus: Glycerol-3-phosphate dehydrogenase [NAD(P)+] (333 aa).

NADPH-binding residues include serine 10, tryptophan 11, histidine 31, arginine 32, and lysine 105. Sn-glycerol 3-phosphate is bound by residues lysine 105, glycine 136, and serine 138. Alanine 140 provides a ligand contact to NADPH. Sn-glycerol 3-phosphate contacts are provided by lysine 191, aspartate 244, serine 254, arginine 255, and asparagine 256. Catalysis depends on lysine 191, which acts as the Proton acceptor. Position 255 (arginine 255) interacts with NADPH. Residues isoleucine 279 and glutamate 281 each contribute to the NADPH site.

This sequence belongs to the NAD-dependent glycerol-3-phosphate dehydrogenase family.

It localises to the cytoplasm. The catalysed reaction is sn-glycerol 3-phosphate + NAD(+) = dihydroxyacetone phosphate + NADH + H(+). It catalyses the reaction sn-glycerol 3-phosphate + NADP(+) = dihydroxyacetone phosphate + NADPH + H(+). The protein operates within membrane lipid metabolism; glycerophospholipid metabolism. Functionally, catalyzes the reduction of the glycolytic intermediate dihydroxyacetone phosphate (DHAP) to sn-glycerol 3-phosphate (G3P), the key precursor for phospholipid synthesis. The protein is Glycerol-3-phosphate dehydrogenase [NAD(P)+] of Chlorobium luteolum (strain DSM 273 / BCRC 81028 / 2530) (Pelodictyon luteolum).